The primary structure comprises 650 residues: DNA ligase (650 aa).

Residues 30–34 (DEEYD), 79–80 (SL), and Asp-108 contribute to the NAD(+) site. Lys-110 (N6-AMP-lysine intermediate) is an active-site residue. NAD(+) contacts are provided by Arg-131, Glu-165, and Lys-304. Cys-398, Cys-401, Cys-414, and Cys-419 together coordinate Zn(2+). In terms of domain architecture, BRCT spans 573 to 650 (PQDSPIAGKS…EEELGEILES (78 aa)).

This sequence belongs to the NAD-dependent DNA ligase family. LigA subfamily. It depends on Mg(2+) as a cofactor. Requires Mn(2+) as cofactor.

It carries out the reaction NAD(+) + (deoxyribonucleotide)n-3'-hydroxyl + 5'-phospho-(deoxyribonucleotide)m = (deoxyribonucleotide)n+m + AMP + beta-nicotinamide D-nucleotide.. In terms of biological role, DNA ligase that catalyzes the formation of phosphodiester linkages between 5'-phosphoryl and 3'-hydroxyl groups in double-stranded DNA using NAD as a coenzyme and as the energy source for the reaction. It is essential for DNA replication and repair of damaged DNA. In Wolinella succinogenes (strain ATCC 29543 / DSM 1740 / CCUG 13145 / JCM 31913 / LMG 7466 / NCTC 11488 / FDC 602W) (Vibrio succinogenes), this protein is DNA ligase.